The chain runs to 524 residues: Butyrophilin subfamily 1 member A1 (524 aa).

A signal peptide spans 1–26; the sequence is MAVPTNSCLLVCLLTLTVLQLPTLDS. The Extracellular portion of the chain corresponds to 27–247; that stretch reads AAPFDVTAPQ…APFVPRLTPW (221 aa). 2 consecutive Ig-like V-type domains span residues 29 to 141 and 149 to 235; these read PFDV…VYLK and PQIS…VEIS. 2 disulfide bridges follow: C51–C125 and C165–C219. N56 and N216 each carry an N-linked (GlcNAc...) asparagine glycan. Residues 248-268 traverse the membrane as a helical segment; the sequence is IVAVAIILLALGFLTIGSIFF. At 269–524 the chain is on the cytoplasmic side; that stretch reads TWKLYKERSS…IPFSPSQAAP (256 aa). Positions 286-480 constitute a B30.2/SPRY domain; that stretch reads SKERLLEELR…LTICSTANGP (195 aa).

The protein belongs to the immunoglobulin superfamily. BTN/MOG family. Seems to associate with xanthine dehydrogenase/oxidase. N-glycosylated. As to expression, strongly expressed in lactating mammary tissue (at protein level). About 100-fold lower levels in virgin mammary tissue. Also detected in spleen and thymus at 10-20 times lower levels compared to those detected in virgin mammary gland. Very low levels in several other tissues, including brain, heart, kidney, lymph node, lung and small intestine. In the thymus, detected in the stroma, in epithelial cells (at protein level). Most prominent in medullary areas of the thymus and at the corticomedullary junction (at protein level).

The protein localises to the membrane. Functionally, may function in the secretion of milk-fat droplets. May act as a specific membrane-associated receptor for the association of cytoplasmic droplets with the apical plasma membrane. Inhibits the proliferation of CD4 and CD8 T-cells activated by anti-CD3 antibodies, T-cell metabolism and IL2 and IFNG secretion. The polypeptide is Butyrophilin subfamily 1 member A1 (Btn1a1) (Mus musculus (Mouse)).